The primary structure comprises 872 residues: MSNVTPMMQQYLKIKSEYQDCLLFFRLGDFYEMFYEDAKEASRVLEITLTKRDAKKENPIPMCGVPYHSADSYIDTLVNNGYKVAICEQMEDPKQTKGMVRREVVRIVTPGTVMEQGGVDDKQNNYILSFVMNQPEIALSYCDVSTGELKVTHFNDEATLLNEITTINPNEVVINDNISDHLKRQINMVTETITVRETLSSEIYSVNQTEHKLMFQATQLLLDYIHHTQKRDLSHIEDVVQYAAIDYMKMDFYAKRNLELTESIRLKSKKGTLLWLMDETKTPMGARRLKQWIDRPLISKEQIEARLDIVDEFSAHFIERDTLRTYLNQVYDIERLVGRVSYGNVNARDLIQLKHSISEIPNIKALLNSMNQDTLVQVNQLEPLDDLLDILEQSLVEEPPISVKDGGLFKVGFNMQLDEYLEASKNGKTWLAELQAKERQRTGIKSLKISFNKVFGYFIEITRANLQNFEPSEFGYMRKQTLSNAERFITDELKEKEDIILGAEDKAIELEYQLFVQLREEVKKYTERLQQQAKIISELDCLQSFAEIAQKYNYTRPSFSENKTLELVESRHPVVERVMDYNDYVPNNCRLDNETFIYLITGPNMSGKSTYMRQVAIISIMAQMGAYVPCKEAVLPIFDQIFTRIGAADDLVSGKSTFMVEMLEAQKALTYATEDSLIIFDEIGRGTSTYDGLALAQAMIEYVAETSHAKTLFSTHYHELTTLDQALPSLKNVHVAANEYKGELIFLHKVKDGAVDDSYGIQVAKLADLPEKVISRAQVILSEFEASADKKSSISNLKMVENEPEINQENSNLSVEETTDTLSQKDFEQASFDLFENDQESEIELQIKNLNLSNMTPIEALVKLSELQNQLK.

602-609 lines the ATP pocket; it reads GPNMSGKS.

It belongs to the DNA mismatch repair MutS family.

In terms of biological role, this protein is involved in the repair of mismatches in DNA. It is possible that it carries out the mismatch recognition step. This protein has a weak ATPase activity. In Staphylococcus aureus (strain bovine RF122 / ET3-1), this protein is DNA mismatch repair protein MutS.